A 354-amino-acid polypeptide reads, in one-letter code: Peroxisomal membrane protein PEX32 (354 aa).

The next 5 helical transmembrane spans lie at L24–L44, F63–V83, L84–D104, G151–V171, and S173–T193. A glycan (N-linked (GlcNAc...) asparagine) is linked at N319.

Belongs to the PEX28-32 family. PEX30/31 subfamily.

It is found in the peroxisome membrane. Its subcellular location is the endoplasmic reticulum membrane. Its function is as follows. With PEX24, contributes to tethering of peroxisomes to the endoplasmic reticulum for organelle biogenesis, positioning and segregation. The polypeptide is Peroxisomal membrane protein PEX32 (Ogataea parapolymorpha (strain ATCC 26012 / BCRC 20466 / JCM 22074 / NRRL Y-7560 / DL-1) (Yeast)).